Consider the following 445-residue polypeptide: NAD-specific glutamate dehydrogenase (445 aa).

Lysine 124 is a catalytic residue.

This sequence belongs to the Glu/Leu/Phe/Val dehydrogenases family. As to quaternary structure, homohexamer.

Its subcellular location is the cell surface. The catalysed reaction is L-glutamate + NAD(+) + H2O = 2-oxoglutarate + NH4(+) + NADH + H(+). Probably involved in degradation rather than biosynthesis of glutamate. The protein is NAD-specific glutamate dehydrogenase (gdh) of Porphyromonas gingivalis (strain ATCC 33277 / DSM 20709 / CIP 103683 / JCM 12257 / NCTC 11834 / 2561).